The sequence spans 338 residues: Phenylalanine--tRNA ligase alpha subunit (338 aa).

Glu253 serves as a coordination point for Mg(2+).

Belongs to the class-II aminoacyl-tRNA synthetase family. Phe-tRNA synthetase alpha subunit type 1 subfamily. In terms of assembly, tetramer of two alpha and two beta subunits. Mg(2+) is required as a cofactor.

Its subcellular location is the cytoplasm. It carries out the reaction tRNA(Phe) + L-phenylalanine + ATP = L-phenylalanyl-tRNA(Phe) + AMP + diphosphate + H(+). The protein is Phenylalanine--tRNA ligase alpha subunit of Citrifermentans bemidjiense (strain ATCC BAA-1014 / DSM 16622 / JCM 12645 / Bem) (Geobacter bemidjiensis).